The chain runs to 101 residues: Small nuclear ribonucleoprotein Sm D3 (101 aa).

Positions 6 to 78 (IPVKLLNEAQ…IKFIVVPDLL (73 aa)) constitute a Sm domain.

This sequence belongs to the snRNP core protein family. Component of the Sm core complex, present in spliceosomal snRNP U1, U2, U4/U6 and U5. The core complex contains SMB1, SMD1, SMD2, SMD3, SME1, SMX3 and SMX2 (Sm proteins B, D1, D2, D3, E, F and G, respectively), and is probably a heptameric ring structure. SMD3 specifically interacts with SMB1. Belongs to the CWC complex (or CEF1-associated complex), a spliceosome sub-complex reminiscent of a late-stage spliceosome composed of the U2, U5 and U6 snRNAs and at least BUD13, BUD31, BRR2, CDC40, CEF1, CLF1, CUS1, CWC2, CWC15, CWC21, CWC22, CWC23, CWC24, CWC25, CWC27, ECM2, HSH155, IST3, ISY1, LEA1, MSL1, NTC20, PRP8, PRP9, PRP11, PRP19, PRP21, PRP22, PRP45, PRP46, SLU7, SMB1, SMD1, SMD2, SMD3, SMX2, SMX3, SNT309, SNU114, SPP2, SYF1, SYF2, RSE1 and YJU2. Component of the U4/U6-U5 tri-snRNP complex composed of the U4, U6 and U5 snRNAs and at least PRP3, PRP4, PRP6, PRP8, PRP18, PRP31, PRP38, SNU13, SNU23, SNU66, SNU114, SPP381, SMB1, SMD1, SMD2, SMD3, SMX2, SMX3, LSM2, LSM3, LSM4, LSM5, LSM6, LSM7, LSM8, BRR2 and DIB1.

Its subcellular location is the cytoplasm. The protein resides in the cytosol. It localises to the nucleus. Plays a role in pre-mRNA splicing as a core component of the spliceosomal U1, U2, U4 and U5 small nuclear ribonucleoproteins (snRNPs), the building blocks of the spliceosome. Also binds telomerase RNA and is required for its accumulation. This chain is Small nuclear ribonucleoprotein Sm D3 (SMD3), found in Saccharomyces cerevisiae (strain ATCC 204508 / S288c) (Baker's yeast).